The chain runs to 107 residues: Antimicrobial peptide microplusin (107 aa).

Positions 1 to 19 (MKSLLVCLVLAVVVLVASG) are cleaved as a signal peptide. 3 disulfides stabilise this stretch: Cys25/Cys60, Cys38/Cys88, and Cys49/Cys54. The interval 86–107 (TDCDHSHGHEHSHGHEHGHGHH) is disordered. The segment covering 87 to 107 (DCDHSHGHEHSHGHEHGHGHH) has biased composition (basic and acidic residues).

It localises to the secreted. Functionally, has bacteriostatic activity against Gram-positive bacteria, but not against Gram-negative bacteria. Has fungistatic activity against some but not all fungi. Binds and sequesters copper and iron ions. Copper-chelating is crucial for antimicrobial activity against M.luteus. The sequence is that of Antimicrobial peptide microplusin from Ixodes scapularis (Black-legged tick).